We begin with the raw amino-acid sequence, 287 residues long: Pol-RFamide neuropeptides (287 aa).

Positions Met-1–Ala-21 are cleaved as a signal peptide. A propeptide spanning residues Asp-22–Asp-52 is cleaved from the precursor. Gln-53 carries the post-translational modification Pyrrolidone carboxylic acid. Phe-59 carries the phenylalanine amide modification. Residues Glu-62–Asn-64 constitute a propeptide that is removed on maturation. Gln-65 bears the Pyrrolidone carboxylic acid mark. Phenylalanine amide is present on Phe-71. Residues Glu-74–Asp-77 constitute a propeptide that is removed on maturation. Gln-78 bears the Pyrrolidone carboxylic acid mark. Phe-84 carries the phenylalanine amide modification. Residues Glu-87–Asp-90 constitute a propeptide that is removed on maturation. Pyrrolidone carboxylic acid is present on Gln-91. The residue at position 97 (Phe-97) is a Phenylalanine amide. The propeptide occupies Glu-100–Asp-103. Gln-104 bears the Pyrrolidone carboxylic acid mark. Position 110 is a phenylalanine amide (Phe-110). Residues Asp-113–Asn-116 constitute a propeptide that is removed on maturation. Pyrrolidone carboxylic acid is present on Gln-117. Position 123 is a phenylalanine amide (Phe-123). A propeptide spanning residues Glu-126 to Asp-129 is cleaved from the precursor. The residue at position 130 (Gln-130) is a Pyrrolidone carboxylic acid. Phe-136 bears the Phenylalanine amide mark. Positions Glu-139–Asn-142 are excised as a propeptide. Gln-143 is subject to Pyrrolidone carboxylic acid. Phe-149 carries the phenylalanine amide modification. A propeptide spanning residues Glu-152 to Asp-168 is cleaved from the precursor. Gln-169 carries the post-translational modification Pyrrolidone carboxylic acid. Position 175 is a phenylalanine amide (Phe-175). Positions Glu-178 to Lys-181 are excised as a propeptide. Gln-182 is subject to Pyrrolidone carboxylic acid. Phe-188 bears the Phenylalanine amide mark. Positions Asp-192–Asn-194 are excised as a propeptide. The residue at position 195 (Gln-195) is a Pyrrolidone carboxylic acid. His-201 bears the Histidine amide mark. The propeptide occupies Glu-204–Asp-207. The residue at position 208 (Gln-208) is a Pyrrolidone carboxylic acid. Phe-214 is subject to Phenylalanine amide. Residues Gln-217–Asp-220 constitute a propeptide that is removed on maturation. The residue at position 221 (Gln-221) is a Pyrrolidone carboxylic acid. At Phe-227 the chain carries Phenylalanine amide. Residues Arg-229 to Lys-267 form a disordered region. A propeptide spanning residues Glu-230 to Val-287 is cleaved from the precursor. A compositionally biased stretch (polar residues) spans Pro-238–Pro-257.

The protein belongs to the FARP (FMRFamide related peptide) family. The N-terminal processing sites of the Pol-RFamide peptides are acidic suggesting that cniderian nervous systems may use a variety of unconventional processing procedures.

It localises to the secreted. Has direct action on motoneurons, and effect includes transient inhibition followed by prolonged excitation. This is Pol-RFamide neuropeptides from Polyorchis penicillatus (Hydromedusa).